Reading from the N-terminus, the 268-residue chain is Undecaprenyl-diphosphatase (268 aa).

Transmembrane regions (helical) follow at residues 43–63 (FWKT…LAIY), 85–105 (IGVL…GTFI), 108–128 (VLFN…VLLW), 141–161 (AMAF…AAMV), 184–204 (AAEF…VYDV), 217–237 (FIII…VKTF), and 246–266 (FTFF…ALAL).

It belongs to the UppP family.

It localises to the cell inner membrane. The enzyme catalyses di-trans,octa-cis-undecaprenyl diphosphate + H2O = di-trans,octa-cis-undecaprenyl phosphate + phosphate + H(+). Catalyzes the dephosphorylation of undecaprenyl diphosphate (UPP). Confers resistance to bacitracin. The protein is Undecaprenyl-diphosphatase of Afipia carboxidovorans (strain ATCC 49405 / DSM 1227 / KCTC 32145 / OM5) (Oligotropha carboxidovorans).